A 335-amino-acid chain; its full sequence is Tetraacyldisaccharide 4'-kinase (335 aa).

58 to 65 serves as a coordination point for ATP; the sequence is TVGGSGKT.

This sequence belongs to the LpxK family.

It catalyses the reaction a lipid A disaccharide + ATP = a lipid IVA + ADP + H(+). Its pathway is glycolipid biosynthesis; lipid IV(A) biosynthesis; lipid IV(A) from (3R)-3-hydroxytetradecanoyl-[acyl-carrier-protein] and UDP-N-acetyl-alpha-D-glucosamine: step 6/6. In terms of biological role, transfers the gamma-phosphate of ATP to the 4'-position of a tetraacyldisaccharide 1-phosphate intermediate (termed DS-1-P) to form tetraacyldisaccharide 1,4'-bis-phosphate (lipid IVA). In Shewanella oneidensis (strain ATCC 700550 / JCM 31522 / CIP 106686 / LMG 19005 / NCIMB 14063 / MR-1), this protein is Tetraacyldisaccharide 4'-kinase.